The chain runs to 525 residues: G patch domain-containing protein 3 (525 aa).

2 disordered regions span residues 54–85 (ERGP…PASD) and 246–317 (EQEE…QERT). The span at 274-299 (DEPEDEGQQQEEEEESGSEEDDDRGE) shows a compositional bias: acidic residues. A compositionally biased stretch (basic and acidic residues) spans 300-317 (EWERHEALHEDVTGQERT). The region spanning 411-459 (TKGIGRKVMERQGWAEGQGLGSRCSGVPEALDGDGQHPRCKRGLGYHGE) is the G-patch domain.

As to quaternary structure, interacts with mitochondrial MAVS; the interaction is markedly increased upon viral infection.

It localises to the nucleus. Its subcellular location is the cytoplasm. Involved in transcriptional regulation. It is able to activate transcription from CXCR4 promoter and therefore it might control neural crest cell migration involved in ocular and craniofacial development. Is a negative regulator of immune antiviral response, acting via down-regulation of RIG-I-like receptors signaling and inhibition of type I interferon production. The control mechanism involves interaction with mitochondrial MAVS and inhibition of MAVS assembly with downstream proteins implicated in antiviral response, such as TBK1 and TRAF6. The chain is G patch domain-containing protein 3 (Gpatch3) from Mus musculus (Mouse).